The sequence spans 447 residues: UPF0210 protein lhv_0606 (447 aa).

Belongs to the UPF0210 family. As to quaternary structure, homodimer.

This chain is UPF0210 protein lhv_0606, found in Lactobacillus helveticus (strain DPC 4571).